The chain runs to 247 residues: V-type proton ATPase subunit D (247 aa).

Belongs to the V-ATPase D subunit family. In terms of assembly, V-ATPase is a heteromultimeric enzyme made up of two complexes: the ATP-hydrolytic V1 complex and the proton translocation V0 complex. The V1 complex consists of three catalytic AB heterodimers that form a heterohexamer, three peripheral stalks each consisting of EG heterodimers, one central rotor including subunits D and F, and the regulatory subunits C and H. The proton translocation complex V0 consists of the proton transport subunit a, a ring of proteolipid subunits c9c'', rotary subunit d, subunits e and f, and the accessory subunits ATP6AP1/Ac45 and ATP6AP2/PRR. Interacts with SNX10. As to expression, expressed in brain (at protein level). Present in tissues active in secretion. Amounts elevated in brain, kidney and testis.

The protein resides in the membrane. It localises to the cytoplasmic vesicle. It is found in the clathrin-coated vesicle membrane. The protein localises to the cytoplasm. Its subcellular location is the cytoskeleton. The protein resides in the microtubule organizing center. It localises to the centrosome. It is found in the cell projection. The protein localises to the cilium. In terms of biological role, subunit of the V1 complex of vacuolar(H+)-ATPase (V-ATPase), a multisubunit enzyme composed of a peripheral complex (V1) that hydrolyzes ATP and a membrane integral complex (V0) that translocates protons. V-ATPase is responsible for acidifying and maintaining the pH of intracellular compartments and in some cell types, is targeted to the plasma membrane, where it is responsible for acidifying the extracellular environment. May play a role in cilium biogenesis through regulation of the transport and the localization of proteins to the cilium. This chain is V-type proton ATPase subunit D (ATP6V1D), found in Bos taurus (Bovine).